We begin with the raw amino-acid sequence, 76 residues long: MPSVRSVACCCLLWMMLSVQLVTPGSPATAQLSGQRTARGPGSAICNMACRLEHGHLYPFCNCDGKRDVVSSSMAV.

An N-terminal signal peptide occupies residues 1 to 27 (MPSVRSVACCCLLWMMLSVQLVTPGSP). Positions 28–39 (ATAQLSGQRTAR) are excised as a propeptide. 2 disulfides stabilise this stretch: Cys-46–Cys-61 and Cys-50–Cys-63. Asp-64 is subject to Aspartic acid 1-amide. A propeptide spanning residues 65 to 76 (GKRDVVSSSMAV) is cleaved from the precursor.

The protein belongs to the conotoxin J superfamily. As to expression, expressed by the venom duct.

It is found in the secreted. Highly inhibits both nicotinic acetylcholine receptors (neuronal (alpha-3/beta-4) and muscular (alpha-1/beta-1/epsilon/delta) subtypes) and the voltage-gated potassium channel Kv1.6/KCNA6 subtype. This Conus planorbis (Planorbis cone) protein is Alpha/kappa-conotoxin-like pl14.3.